The sequence spans 127 residues: Aspartate 1-decarboxylase (127 aa).

The active-site Schiff-base intermediate with substrate; via pyruvic acid is the Ser25. A Pyruvic acid (Ser) modification is found at Ser25. Thr57 is a substrate binding site. Tyr58 functions as the Proton donor in the catalytic mechanism. Residue 73 to 75 participates in substrate binding; it reads GAA.

This sequence belongs to the PanD family. Heterooctamer of four alpha and four beta subunits. It depends on pyruvate as a cofactor. Post-translationally, is synthesized initially as an inactive proenzyme, which is activated by self-cleavage at a specific serine bond to produce a beta-subunit with a hydroxyl group at its C-terminus and an alpha-subunit with a pyruvoyl group at its N-terminus.

The protein localises to the cytoplasm. It catalyses the reaction L-aspartate + H(+) = beta-alanine + CO2. It participates in cofactor biosynthesis; (R)-pantothenate biosynthesis; beta-alanine from L-aspartate: step 1/1. Functionally, catalyzes the pyruvoyl-dependent decarboxylation of aspartate to produce beta-alanine. The sequence is that of Aspartate 1-decarboxylase from Aliarcobacter butzleri (strain RM4018) (Arcobacter butzleri).